The primary structure comprises 132 residues: Heat shock protein 15 homolog (132 aa).

Residues Val11–Val73 form the S4 RNA-binding domain. Composition is skewed to basic and acidic residues over residues Leu94–Arg105 and Pro114–Gln125. A disordered region spans residues Leu94–Tyr132.

It belongs to the HSP15 family.

In terms of biological role, may play an important role in binding of nucleic acid. More specific for RNA. The chain is Heat shock protein 15 homolog (hslR) from Aeromonas salmonicida.